The primary structure comprises 166 residues: uncharacterized protein (166 aa).

4Fe-4S ferredoxin-type domains are found at residues 3–33 (MKKI…GRIA), 37–67 (KDGK…EHKD), and 68–97 (GYVY…MEDK). [4Fe-4S] cluster contacts are provided by Cys13, Cys16, Cys19, Cys23, Cys46, Cys49, Cys54, Cys58, Cys77, Cys80, Cys83, Cys87, Cys101, Cys104, Cys111, and Cys115.

[4Fe-4S] cluster serves as cofactor.

This is an uncharacterized protein from Methanocaldococcus jannaschii (strain ATCC 43067 / DSM 2661 / JAL-1 / JCM 10045 / NBRC 100440) (Methanococcus jannaschii).